The chain runs to 311 residues: Olfactory receptor 287 (311 aa).

Over methionine 1–arginine 27 the chain is Extracellular. Residue asparagine 8 is glycosylated (N-linked (GlcNAc...) asparagine). A helical transmembrane segment spans residues isoleucine 28 to glycine 53. At alanine 54–threonine 60 the chain is on the cytoplasmic side. The helical transmembrane segment at proline 61–proline 82 threads the bilayer. At lysine 83–glutamine 103 the chain is on the extracellular side. An intrachain disulfide couples cysteine 100 to cysteine 192. The helical transmembrane segment at methionine 104–tyrosine 123 threads the bilayer. Topologically, residues aspartate 124–glycine 142 are cytoplasmic. A helical transmembrane segment spans residues leucine 143–valine 161. The Extracellular segment spans residues proline 162–glutamate 199. The chain crosses the membrane as a helical span at residues leucine 200–alanine 222. Over tyrosine 223–arginine 239 the chain is Cytoplasmic. A helical transmembrane segment spans residues alanine 240–valine 263. The Extracellular segment spans residues arginine 264–lysine 275. Residues alanine 276–leucine 295 form a helical membrane-spanning segment. The Cytoplasmic portion of the chain corresponds to arginine 296–lysine 311.

Belongs to the G-protein coupled receptor 1 family. Olfactory epithelium.

The protein resides in the cell membrane. Odorant receptor. The protein is Olfactory receptor 287 (Olr287) of Rattus norvegicus (Rat).